The sequence spans 241 residues: N-acetylmuramoyl-L-alanine amidase Rv3717 (241 aa).

A signal peptide spans 1-24; that stretch reads MIVGVLVAAATPIISSASATPANI. Positions 29-230 constitute a MurNAc-LAA domain; it reads VFIDPGHNGA…KYANALVRGV (202 aa). Histidine 35 contributes to the Zn(2+) binding site. Residues 45 to 69 are disordered; sequence RQVPTGRGGTKNCQASGTSTNSGYP. Polar residues predominate over residues 55–67; it reads KNCQASGTSTNSG. Cysteine 57 and cysteine 105 are disulfide-bonded. 2 residues coordinate Zn(2+): glutamate 70 and histidine 125. Glutamate 200 acts as the Proton donor/acceptor in catalysis.

This sequence belongs to the N-acetylmuramoyl-L-alanine amidase 3 family. In terms of assembly, monomer. Zn(2+) serves as cofactor.

The protein resides in the periplasm. The enzyme catalyses Hydrolyzes the link between N-acetylmuramoyl residues and L-amino acid residues in certain cell-wall glycopeptides.. It functions in the pathway cell wall degradation; peptidoglycan degradation. The structure reveals a short flexible hairpin turn that partially occludes the active site and may be involved in autoregulation. Functionally, cell-wall hydrolase that hydrolyzes the amide bond between N-acetylmuramic acid and L-alanine in cell-wall glycopeptides. Is able to hydrolyze the cell walls of several bacterial species (i.e. Paenibacillus sp., B.avium, E.coli DH5alpha, E.aerogenes, L.acidophilus, B.thuringiensis, B.pumilus, B.subtilis and E.coli W3110), thereby showing that it is a cell-wall hydrolase with broad-spectrum activity. May have a role in peptidoglycan fragment recycling. The protein is N-acetylmuramoyl-L-alanine amidase Rv3717 of Mycobacterium tuberculosis (strain ATCC 25618 / H37Rv).